We begin with the raw amino-acid sequence, 268 residues long: Putative ABC transporter ATP-binding protein MK0182 (268 aa).

Residues 1–229 form the ABC transporter domain; it reads MTHEYPDGTC…VDLIRESGLK (229 aa). 29–36 lines the ATP pocket; that stretch reads GPNGSGKT.

It belongs to the ABC transporter superfamily.

It is found in the cell membrane. Its function is as follows. Probably part of an ABC transporter complex. Responsible for energy coupling to the transport system. The protein is Putative ABC transporter ATP-binding protein MK0182 of Methanopyrus kandleri (strain AV19 / DSM 6324 / JCM 9639 / NBRC 100938).